Consider the following 127-residue polypeptide: Cyclin-dependent protein kinase inhibitor SIM (127 aa).

The disordered stretch occupies residues 21–71 (RANTNRDDDGGGCTTPTSSDHKIPPTTATTPPPPPQKPRPPSTPSSLGIRS). Residues 50–63 (TPPPPPQKPRPPST) are compositionally biased toward pro residues.

Interacts with CDKA-1. Interacts with CYCD2-1, CYCD3-2 and CYCD4-1. Interacts with CDKB1-1. Interacts with CPR5. Expressed in the shoot apical meristem, leaf primordia and the elongation zone of the root.

Its subcellular location is the nucleus. Cyclin-dependent protein kinase (CDK) inhibitor that functions as a repressor of mitosis in the endoreduplication cell cycle. Inhibits the kinase activity of CYCD3-1/CDKA-1, CYCD2-1/CDKA-1 and CYCB1-1/CDKB1-1 complexes in a dose dependent manner. Cooperates with SMR1 and SMR2 to promote endoreplication during leaf development. Required for normal trichome endoreplicating cell cycles. Positive regulator of effector-triggered immunity (ETI). The polypeptide is Cyclin-dependent protein kinase inhibitor SIM (Arabidopsis thaliana (Mouse-ear cress)).